We begin with the raw amino-acid sequence, 47 residues long: Large ribosomal subunit protein eL40 (47 aa).

The protein belongs to the eukaryotic ribosomal protein eL40 family.

This Methanococcus aeolicus (strain ATCC BAA-1280 / DSM 17508 / OCM 812 / Nankai-3) protein is Large ribosomal subunit protein eL40.